We begin with the raw amino-acid sequence, 259 residues long: uncharacterized protein (259 aa).

Residues 110-259 (QMGHPLTAWG…VHTVFHYFLT (150 aa)) form the N-acetyltransferase domain.

Its function is as follows. May be involved in maturation of the outermost layer of the spore. This is an uncharacterized protein from Bacillus subtilis (strain 168).